The following is a 441-amino-acid chain: G2/mitotic-specific cyclin-2 (441 aa).

The protein belongs to the cyclin family. Cyclin AB subfamily. Interacts with the CDC2 and CDK2 protein kinases to form a serine/threonine kinase holoenzyme complex. The cyclin subunit imparts substrate specificity to the complex.

Its function is as follows. Essential for the control of the cell cycle at the G2/M (mitosis) transition. G2/M cyclins accumulate steadily during G2 and are abruptly destroyed at mitosis. This Antirrhinum majus (Garden snapdragon) protein is G2/mitotic-specific cyclin-2.